The chain runs to 120 residues: Large ribosomal subunit protein uL18 (120 aa).

It belongs to the universal ribosomal protein uL18 family. Part of the 50S ribosomal subunit; part of the 5S rRNA/L5/L18/L25 subcomplex. Contacts the 5S and 23S rRNAs.

In terms of biological role, this is one of the proteins that bind and probably mediate the attachment of the 5S RNA into the large ribosomal subunit, where it forms part of the central protuberance. The sequence is that of Large ribosomal subunit protein uL18 from Oleidesulfovibrio alaskensis (strain ATCC BAA-1058 / DSM 17464 / G20) (Desulfovibrio alaskensis).